A 232-amino-acid polypeptide reads, in one-letter code: uncharacterized protein (232 aa).

The next 7 helical transmembrane spans lie at phenylalanine 17–tyrosine 37, methionine 54–leucine 74, alanine 84–tyrosine 104, glycine 107–glycine 127, glycine 138–phenylalanine 158, serine 161–tyrosine 181, and methionine 203–leucine 223.

It belongs to the BI1 family.

The protein localises to the cell membrane. This is an uncharacterized protein from Borreliella burgdorferi (strain ATCC 35210 / DSM 4680 / CIP 102532 / B31) (Borrelia burgdorferi).